We begin with the raw amino-acid sequence, 284 residues long: MDAIKKKMQMLKLDKENALDRAEQAEADKKAAEDRSKQLEDELVSLQKKLKGTEDELDKYSEALKDAQEKLELAEKKATDAEADVASLNRRIQLVEEELDRAQERLATALQKLEEAEKAADESERGMKVIESRAQKDEEKMEIQEIQLKEAKHIAEDADRKYEEVARKLVIIESDLERAEERAELSEGKCAELEEELKTVTNNLKSLEAQAEKYSQKEDKYEEEIKVLSDKLKEAETRAEFAERSVTKLEKSIDDLEDELYAQKLKYKAISEELDHALNDMTSI.

Residue M1 is modified to N-acetylmethionine. Residues 1–38 (MDAIKKKMQMLKLDKENALDRAEQAEADKKAAEDRSKQ) are disordered. Residues 1–284 (MDAIKKKMQM…DHALNDMTSI (284 aa)) are a coiled coil. Residues 12–38 (KLDKENALDRAEQAEADKKAAEDRSKQ) show a composition bias toward basic and acidic residues. S45 carries the phosphoserine modification. Residues 116 to 136 (AEKAADESERGMKVIESRAQK) form a disordered region. A phosphoserine mark is found at S174, S186, S206, and S252. Y261 carries the post-translational modification Phosphotyrosine. Residues S271 and S283 each carry the phosphoserine modification.

The protein belongs to the tropomyosin family. Homodimer. Heterodimer of an alpha (TPM1, TPM3 or TPM4) and a beta (TPM2) chain. Interacts with HRG (via the HRR domain); the interaction contributes to the antiangiogenic properties of the histidine/proline-rich region (HRR) of HRG. Interacts (via N-terminus) with LMOD2 (via N-terminus) and TMOD1 (via N-terminus). Phosphorylated at Ser-283 by DAPK1 in response to oxidative stress and this phosphorylation enhances stress fiber formation in endothelial cells.

It is found in the cytoplasm. It localises to the cytoskeleton. In terms of biological role, binds to actin filaments in muscle and non-muscle cells. Plays a central role, in association with the troponin complex, in the calcium dependent regulation of vertebrate striated muscle contraction. Smooth muscle contraction is regulated by interaction with caldesmon. In non-muscle cells is implicated in stabilizing cytoskeleton actin filaments. The polypeptide is Tropomyosin alpha-1 chain (Tpm1) (Mus musculus (Mouse)).